The chain runs to 490 residues: Probable glycine dehydrogenase (decarboxylating) subunit 2 (490 aa).

Lysine 273 is modified (N6-(pyridoxal phosphate)lysine).

The protein belongs to the GcvP family. C-terminal subunit subfamily. As to quaternary structure, the glycine cleavage system is composed of four proteins: P, T, L and H. In this organism, the P 'protein' is a heterodimer of two subunits. It depends on pyridoxal 5'-phosphate as a cofactor.

The catalysed reaction is N(6)-[(R)-lipoyl]-L-lysyl-[glycine-cleavage complex H protein] + glycine + H(+) = N(6)-[(R)-S(8)-aminomethyldihydrolipoyl]-L-lysyl-[glycine-cleavage complex H protein] + CO2. Functionally, the glycine cleavage system catalyzes the degradation of glycine. The P protein binds the alpha-amino group of glycine through its pyridoxal phosphate cofactor; CO(2) is released and the remaining methylamine moiety is then transferred to the lipoamide cofactor of the H protein. The protein is Probable glycine dehydrogenase (decarboxylating) subunit 2 of Staphylococcus aureus (strain MRSA252).